The sequence spans 214 residues: tRNA (guanine-N(7)-)-methyltransferase (214 aa).

S-adenosyl-L-methionine is bound by residues D35, E60, N87, and D113. Residue D113 is part of the active site. Residues K117 and D149 each contribute to the substrate site.

It belongs to the class I-like SAM-binding methyltransferase superfamily. TrmB family.

It carries out the reaction guanosine(46) in tRNA + S-adenosyl-L-methionine = N(7)-methylguanosine(46) in tRNA + S-adenosyl-L-homocysteine. It participates in tRNA modification; N(7)-methylguanine-tRNA biosynthesis. In terms of biological role, catalyzes the formation of N(7)-methylguanine at position 46 (m7G46) in tRNA. In Prochlorococcus marinus (strain NATL2A), this protein is tRNA (guanine-N(7)-)-methyltransferase.